A 496-amino-acid polypeptide reads, in one-letter code: Cytochrome P450 71D181 (496 aa).

The helical; Signal-anchor for type II membrane protein transmembrane segment at 1 to 21 threads the bilayer; that stretch reads MDISILWVAIILVISSYFIFM. C435 is a binding site for heme. Residues 471 to 496 form a disordered region; it reads MSETPGLSGPRKNPLIMVPTIHNPTS.

It belongs to the cytochrome P450 family. It depends on heme as a cofactor.

It localises to the membrane. It carries out the reaction gamma-terpinene + 2 reduced [NADPH--hemoprotein reductase] + 2 O2 = carvacrol + 2 oxidized [NADPH--hemoprotein reductase] + 3 H2O + 2 H(+). The catalysed reaction is (4S)-limonene + reduced [NADPH--hemoprotein reductase] + O2 = (1S,5R)-carveol + oxidized [NADPH--hemoprotein reductase] + H2O + H(+). It catalyses the reaction (4R)-limonene + reduced [NADPH--hemoprotein reductase] + O2 = (1R,5S)-carveol + oxidized [NADPH--hemoprotein reductase] + H2O + H(+). The enzyme catalyses alpha-terpinene + 2 reduced [NADPH--hemoprotein reductase] + 2 O2 = carvacrol + 2 oxidized [NADPH--hemoprotein reductase] + 3 H2O + 2 H(+). It functions in the pathway secondary metabolite biosynthesis; terpenoid biosynthesis. In terms of biological role, involved in the biosynthesis of phenolic monoterpenes natural products thymol and carvacrol which have a broad range of biological activities acting as antimicrobial compounds, insecticides, antioxidants and pharmaceutical agents. Catalyzes the C2-hydroxylation of gamma-terpinene and alpha-terpinene to produce carvacrol. Also mediates the C6-hydroxylation of (4S)-limonene and (4R)-limonene to form carveol. This is Cytochrome P450 71D181 from Thymus vulgaris (Thyme).